The chain runs to 335 residues: Tryptophan--tRNA ligase (335 aa).

ATP contacts are provided by residues 13-15 (QPS) and 21-22 (GN). The 'HIGH' region signature appears at 14–22 (PSGNLTIGN). Residue aspartate 136 participates in L-tryptophan binding. ATP is bound by residues 148–150 (GQD), isoleucine 187, and 196–200 (KMSKS). The 'KMSKS' region motif lies at 196 to 200 (KMSKS).

Belongs to the class-I aminoacyl-tRNA synthetase family. In terms of assembly, homodimer.

It is found in the cytoplasm. The catalysed reaction is tRNA(Trp) + L-tryptophan + ATP = L-tryptophyl-tRNA(Trp) + AMP + diphosphate + H(+). In terms of biological role, catalyzes the attachment of tryptophan to tRNA(Trp). The sequence is that of Tryptophan--tRNA ligase from Buchnera aphidicola subsp. Acyrthosiphon pisum (strain APS) (Acyrthosiphon pisum symbiotic bacterium).